The following is a 350-amino-acid chain: Calcium uniporter protein, mitochondrial (350 aa).

The N-terminal 49 residues, 1–49 (MAAAAGRSLLLLLCSRGGGGGAGGCGALTAGCFPGLGVSRHRPHQQHRT), are a transit peptide targeting the mitochondrion. Residues 50-232 (AHQRPASWQS…ISRKAEKRTT (183 aa)) are Mitochondrial matrix-facing. Residues serine 56 and serine 91 each carry the phosphoserine; by CaMK2 modification. An N-terminal MCU domain region spans residues 74–164 (VTVVYQNGLP…LTYHVRPPKR (91 aa)). Cysteine 96 is subject to S-glutathionyl cysteine. A coiled-coil region spans residues 191–220 (IEQHQLNKERELVERLEDLKQQLAPLEKVR). The helical transmembrane segment at 233 to 256 (LVLWGGLAYMATQFGILARLTWWE) threads the bilayer. Residues 257 to 264 (YSWDIMEP) lie on the Mitochondrial intermembrane side of the membrane. The Selectivity filter motif lies at 259-267 (WDIMEPVTY). Position 263 (glutamate 263) interacts with Ca(2+). Residues 265-282 (VTYFITYGSAMAMYAYFV) traverse the membrane as a helical segment. Over 283–350 (MTRQEYVYPE…LPLRQIGEKE (68 aa)) the chain is Mitochondrial matrix. A juxtamembrane helix region spans residues 284 to 289 (TRQEYV). Residues 310–338 (RFDLEKYNQLKDAIAQAEMDLKRLRDPLQ) are a coiled coil. Lysine 331 is subject to N6-acetyllysine.

It belongs to the MCU (TC 1.A.77) family. In terms of assembly, homotetramer. Component of the uniplex complex, composed of MCU, EMRE/SMDT1, MICU1 and MICU2 (or MICU3) in a 4:4:1:1 stoichiometry. Interacts with CCDC109B/MCUB; this inhibits channel activity. Interacts with MCUR1. Interactions with MICU1 and MCUR1 are mutually exclusive. Interacts with SLC25A23. Post-translationally, phosphorylation by CaMK2 in heart leads to increased MCU current. The regulation of MCU by CaMK2 is however subject to discussion: another group was unable to reproduce these results. Phosphorylated on tyrosines by PTK2B/PYK2, promoting oligomerization. Glutathionylation at Cys-96 in response to reactive oxygen species (ROS) promotes MCU higher-order assembly, leading to constitutive activation of the MCU channel and mitochondrial calcium overload. In terms of processing, undergoes proteolytic degradation by SPG7. As to expression, detected in heart muscle (at protein level). Expressed in skeletal muscle, heart, kidney, liver, brain, lung, white fat and spleen.

The protein resides in the mitochondrion inner membrane. The catalysed reaction is Ca(2+)(in) = Ca(2+)(out). With respect to regulation, MCU channel activity is regulated by the heterodimer composed of MICU1 and either MICU2 or MICU3, which act as calcium-sensors. At low calcium levels, MICU1 occludes the pore of the MCU channel, preventing mitochondrial calcium uptake. At higher calcium levels, calcium-binding to MICU1 and MICU2 (or MICU3) induces a conformational change that weakens MCU-MICU1 interactions and moves the MICU1-MICU2 heterodimer away from the pore, allowing calcium permeation through the channel. MCU channel activity is gated by EMRE/SMDT1 via the juxtamembrane helix loop. Inhibited by ruthenium red or its derivative Ru360. Functionally, channel-forming and calcium-conducting subunit of the mitochondrial inner membrane calcium uniporter complex (uniplex), which mediates calcium uptake into the mitochondrial matrix. MCU channel activity is regulated by the calcium-sensor subunits of the uniplex MICU1 and MICU2 (or MICU3). Mitochondrial calcium homeostasis plays key roles in cellular physiology and regulates ATP production, cytoplasmic calcium signals and activation of cell death pathways. Involved in buffering the amplitude of systolic calcium rises in cardiomyocytes. While dispensable for baseline homeostatic cardiac function, acts as a key regulator of short-term mitochondrial calcium loading underlying a 'fight-or-flight' response during acute stress: acts by mediating a rapid increase of mitochondrial calcium in pacemaker cells. Participates in mitochondrial permeability transition during ischemia-reperfusion injury. Mitochondrial calcium uptake in skeletal muscle cells is involved in muscle size in adults. Regulates synaptic vesicle endocytosis kinetics in central nerve terminal. Regulates glucose-dependent insulin secretion in pancreatic beta-cells by regulating mitochondrial calcium uptake. Involved in antigen processing and presentation. In Mus musculus (Mouse), this protein is Calcium uniporter protein, mitochondrial.